Consider the following 784-residue polypeptide: 1-phosphatidylinositol 4,5-bisphosphate phosphodiesterase delta-3-A (784 aa).

Positions 1-25 are disordered; that stretch reads MLGRKKNPETVQTESKSVESKTHDP. The segment covering 16-25 has biased composition (basic and acidic residues); sequence KSVESKTHDP. Residues 38 to 149 enclose the PH domain; sequence LLMLQGSKMM…WVRGIRTLKD (112 aa). Residues 48-78 are substrate binding; it reads KVRSQRWRKDRRLKLLEDCVTVWCESSKTSR. 3 EF-hand domains span residues 159–194, 195–230, and 227–262; these read KLDHWIRGYLRRADQNQDGKMSYDEVKHLLQLINID, LNEQYARTLFKKCDRSCDGRLDHVEIEEFCREMMRR, and MMRRPELDAVFRHYSGNGCVLTTLELRDFLGDQGED. Ca(2+)-binding residues include Asp-172, Asn-174, Asp-176, Lys-178, Glu-183, Asp-208, Ser-210, Asp-212, Arg-214, and Glu-219. The PI-PLC X-box domain maps to 313–458; it reads QDMSKPLAHY…LKGRILLKGK (146 aa). His-328 is a catalytic residue. Residues Asn-329, Glu-358, and Asp-360 each coordinate Ca(2+). His-373 is a catalytic residue. Glu-407 contributes to the Ca(2+) binding site. Substrate is bound by residues Lys-456 and Lys-458. A disordered region spans residues 473 to 498; it reads FTNSSDEESVAGGNKKESKKDLARSA. Basic and acidic residues predominate over residues 486–495; the sequence is NKKESKKDLA. The 116-residue stretch at 506-621 folds into the PI-PLC Y-box domain; the sequence is LSDLVVYCQS…GYVLKPEFLC (116 aa). Positions 534 and 561 each coordinate substrate. One can recognise a C2 domain in the interval 621 to 750; that stretch reads CDPKSDFDPE…TGYRHVHLLK (130 aa). Positions 664, 666, 690, 719, and 721 each coordinate Ca(2+).

It depends on Ca(2+) as a cofactor.

It is found in the membrane. It localises to the cytoplasm. The protein resides in the cleavage furrow. It catalyses the reaction a 1,2-diacyl-sn-glycero-3-phospho-(1D-myo-inositol-4,5-bisphosphate) + H2O = 1D-myo-inositol 1,4,5-trisphosphate + a 1,2-diacyl-sn-glycerol + H(+). Hydrolyzes the phosphatidylinositol 4,5-bisphosphate (PIP2) to generate 2 second messenger molecules diacylglycerol (DAG) and inositol 1,4,5-trisphosphate (IP3). DAG mediates the activation of protein kinase C (PKC), while IP3 releases Ca(2+) from intracellular stores. This Danio rerio (Zebrafish) protein is 1-phosphatidylinositol 4,5-bisphosphate phosphodiesterase delta-3-A (plcd3a).